A 613-amino-acid chain; its full sequence is Cilia- and flagella-associated protein 100 (613 aa).

The segment at 36–55 (KSKESKKNKGNVTISDRSSN) is disordered. Positions 45-55 (GNVTISDRSSN) are enriched in polar residues. 4 coiled-coil regions span residues 167–198 (ALAM…FLEK), 233–260 (VEIR…KHYK), 396–435 (FTKL…DKEV), and 504–580 (GTVQ…RGRK).

This sequence belongs to the CFAP100 family.

The protein localises to the cytoplasm. The protein resides in the cytoskeleton. It is found in the cilium axoneme. In terms of biological role, may play a role in ciliary/flagellar motility by regulating the assembly and the activity of axonemal inner dynein arm. The chain is Cilia- and flagella-associated protein 100 from Mus musculus (Mouse).